We begin with the raw amino-acid sequence, 152 residues long: Superoxide dismutase [Cu-Zn] (152 aa).

Cu cation is bound by residues H45, H47, and H62. Cysteines 56 and 145 form a disulfide. Positions 62, 70, 79, and 82 each coordinate Zn(2+). H119 lines the Cu cation pocket.

It belongs to the Cu-Zn superoxide dismutase family. In terms of assembly, homodimer. Cu cation serves as cofactor. Zn(2+) is required as a cofactor.

It is found in the cytoplasm. It catalyses the reaction 2 superoxide + 2 H(+) = H2O2 + O2. Destroys radicals which are normally produced within the cells and which are toxic to biological systems. The chain is Superoxide dismutase [Cu-Zn] (SODCC) from Pisum sativum (Garden pea).